The chain runs to 204 residues: DNA-directed RNA polymerase III subunit RPC8 (204 aa).

Residues 158–178 (VDTSPTGPSSAEAASSSEELP) are disordered. Low complexity predominate over residues 166–175 (SSAEAASSSE).

Belongs to the eukaryotic RPB7/RPC8 RNA polymerase subunit family. Component of the RNA polymerase III complex consisting of 17 subunits: a ten-subunit horseshoe-shaped catalytic core composed of POLR3A/RPC1, POLR3B/RPC2, POLR1C/RPAC1, POLR1D/RPAC2, POLR3K/RPC10, POLR2E/RPABC1, POLR2F/RPABC2, POLR2H/RPABC3, POLR2K/RPABC4 and POLR2L/RPABC5; a mobile stalk composed of two subunits POLR3H/RPC8 and CRCP/RPC9, protruding from the core and functioning primarily in transcription initiation; and additional subunits homologous to general transcription factors of the RNA polymerase II machinery, POLR3C/RPC3-POLR3F/RPC6-POLR3G/RPC7 heterotrimer required for transcription initiation and POLR3D/RPC4-POLR3E/RPC5 heterodimer involved in both transcription initiation and termination. Interacts with CRCP/RPC9. POLR3H/RPC8 and CRCP/RPC9 probably form a Pol III subcomplex.

It localises to the nucleus. DNA-dependent RNA polymerase catalyzes the transcription of DNA into RNA using the four ribonucleoside triphosphates as substrates. Specific peripheric component of RNA polymerase III (Pol III) which synthesizes small non-coding RNAs including 5S rRNA, snRNAs, tRNAs and miRNAs from at least 500 distinct genomic loci. With CRCP/RPC9 forms a mobile stalk that protrudes from Pol III core and functions primarily in transcription initiation. Pol III plays a key role in sensing and limiting infection by intracellular bacteria and DNA viruses. Acts as nuclear and cytosolic DNA sensor involved in innate immune response. Can sense non-self dsDNA that serves as template for transcription into dsRNA. The non-self RNA polymerase III transcripts, such as Epstein-Barr virus-encoded RNAs (EBERs) induce type I interferon and NF-kappa-B through the RIG-I pathway. The sequence is that of DNA-directed RNA polymerase III subunit RPC8 (POLR3H) from Bos taurus (Bovine).